Reading from the N-terminus, the 261-residue chain is MKTLATIGDNCVDIYPQLNKAFSGGNAVNVAVYCTRYGIQPGCITWVGDDDYGTKLKQDLARMGVDISHVHTKHGVTAQTQVELHDNDRVFGDYTEGVMADFALSEEDYAWLAQYDIVHAAIWGHAEDAFPQLHAAGKLTAFDFSDKWDSPLWQTLVPHLDFAFASAPQEDETLRLKMKAIVARGAGTVIVTLGENGSIAWDGAQFWRQAPEPVTVIDTMGAGDSFIAGFLCGWSAGMTLPQAIAQGTACAAKTIQYHGAW.

It belongs to the carbohydrate kinase PfkB family. In terms of assembly, monomer.

The enzyme catalyses N(6)-(D-fructosyl)-L-lysine + ATP = N(6)-(6-phospho-D-fructosyl)-L-lysine + ADP + H(+). The protein operates within carbohydrate metabolism; fructoselysine degradation; D-glucose 6-phosphate and lysine from fructoselysine: step 1/2. Functionally, catalyzes the ATP-dependent phosphorylation of fructoselysine to fructoselysine 6-phosphate. Functions in a fructoselysine degradation pathway that allows E.coli to grow on fructoselysine or psicoselysine. To a much lesser extenst, is also able to phosphorylate psicoselysine. The polypeptide is Fructoselysine 6-kinase (Escherichia coli (strain K12)).